A 289-amino-acid polypeptide reads, in one-letter code: ATP synthase gamma chain (289 aa).

This sequence belongs to the ATPase gamma chain family. In terms of assembly, F-type ATPases have 2 components, CF(1) - the catalytic core - and CF(0) - the membrane proton channel. CF(1) has five subunits: alpha(3), beta(3), gamma(1), delta(1), epsilon(1). CF(0) has three main subunits: a, b and c.

Its subcellular location is the cell membrane. Its function is as follows. Produces ATP from ADP in the presence of a proton gradient across the membrane. The gamma chain is believed to be important in regulating ATPase activity and the flow of protons through the CF(0) complex. The polypeptide is ATP synthase gamma chain (Lactococcus lactis subsp. cremoris (strain MG1363)).